Here is a 236-residue protein sequence, read N- to C-terminus: Uridylate kinase (236 aa).

Residue 11–14 (KFSG) participates in ATP binding. Gly53 contributes to the UMP binding site. The ATP site is built by Gly54 and Arg58. UMP is bound by residues Asp73 and 134–141 (TGSPFFTT). Positions 161, 167, and 170 each coordinate ATP.

This sequence belongs to the UMP kinase family. As to quaternary structure, homohexamer.

It is found in the cytoplasm. The enzyme catalyses UMP + ATP = UDP + ADP. Its pathway is pyrimidine metabolism; CTP biosynthesis via de novo pathway; UDP from UMP (UMPK route): step 1/1. Inhibited by UTP. Catalyzes the reversible phosphorylation of UMP to UDP. The sequence is that of Uridylate kinase from Hydrogenovibrio crunogenus (strain DSM 25203 / XCL-2) (Thiomicrospira crunogena).